The sequence spans 231 residues: Large ribosomal subunit protein uL1 (231 aa).

Belongs to the universal ribosomal protein uL1 family. Part of the 50S ribosomal subunit.

Functionally, binds directly to 23S rRNA. The L1 stalk is quite mobile in the ribosome, and is involved in E site tRNA release. In terms of biological role, protein L1 is also a translational repressor protein, it controls the translation of the L11 operon by binding to its mRNA. This chain is Large ribosomal subunit protein uL1, found in Francisella philomiragia subsp. philomiragia (strain ATCC 25017 / CCUG 19701 / FSC 153 / O#319-036).